Reading from the N-terminus, the 272-residue chain is Dermonecrotic toxin LvSicTox-alphaIC1biv (272 aa).

Histidine 5 is a catalytic residue. Mg(2+) is bound by residues glutamate 25 and aspartate 27. The active-site Nucleophile is the histidine 41. 2 disulfides stabilise this stretch: cysteine 45/cysteine 51 and cysteine 47/cysteine 189. A Mg(2+)-binding site is contributed by aspartate 84.

This sequence belongs to the arthropod phospholipase D family. Class II subfamily. The cofactor is Mg(2+). As to expression, expressed by the venom gland.

The protein localises to the secreted. The enzyme catalyses an N-(acyl)-sphingosylphosphocholine = an N-(acyl)-sphingosyl-1,3-cyclic phosphate + choline. It catalyses the reaction an N-(acyl)-sphingosylphosphoethanolamine = an N-(acyl)-sphingosyl-1,3-cyclic phosphate + ethanolamine. The catalysed reaction is a 1-acyl-sn-glycero-3-phosphocholine = a 1-acyl-sn-glycero-2,3-cyclic phosphate + choline. It carries out the reaction a 1-acyl-sn-glycero-3-phosphoethanolamine = a 1-acyl-sn-glycero-2,3-cyclic phosphate + ethanolamine. Its function is as follows. Dermonecrotic toxins cleave the phosphodiester linkage between the phosphate and headgroup of certain phospholipids (sphingolipid and lysolipid substrates), forming an alcohol (often choline) and a cyclic phosphate. This toxin acts on sphingomyelin (SM). It may also act on ceramide phosphoethanolamine (CPE), lysophosphatidylcholine (LPC) and lysophosphatidylethanolamine (LPE), but not on lysophosphatidylserine (LPS), and lysophosphatidylglycerol (LPG). It acts by transphosphatidylation, releasing exclusively cyclic phosphate products as second products. Induces dermonecrosis, hemolysis, increased vascular permeability, edema, inflammatory response, and platelet aggregation. This chain is Dermonecrotic toxin LvSicTox-alphaIC1biv, found in Loxosceles variegata (Recluse spider).